The sequence spans 414 residues: Tryptophan synthase beta chain (414 aa).

Position 109 is an N6-(pyridoxal phosphate)lysine (K109).

It belongs to the TrpB family. As to quaternary structure, tetramer of two alpha and two beta chains. Pyridoxal 5'-phosphate is required as a cofactor.

The enzyme catalyses (1S,2R)-1-C-(indol-3-yl)glycerol 3-phosphate + L-serine = D-glyceraldehyde 3-phosphate + L-tryptophan + H2O. It functions in the pathway amino-acid biosynthesis; L-tryptophan biosynthesis; L-tryptophan from chorismate: step 5/5. The beta subunit is responsible for the synthesis of L-tryptophan from indole and L-serine. This is Tryptophan synthase beta chain from Prochlorococcus marinus (strain AS9601).